A 135-amino-acid chain; its full sequence is RxLR effector protein Avh5 (135 aa).

The N-terminal stretch at 1–19 (MRLQFFLVMAVATLATISA) is a signal peptide. Positions 43–71 (RFLRTADTDIVYEPKVHNPGKKQVFIEDK) match the RxLR-dEER motif. 3 residues coordinate a 1,2-diacyl-sn-glycero-3-phospho-(1D-myo-inositol-3-phosphate): K81, K83, and K84.

This sequence belongs to the RxLR effector family.

It localises to the secreted. The protein localises to the host cell. Functionally, effector that suppresses plant defense responses during the early stages of pathogen infection. Suppresses cell death induced by effectors and PAMPs in plant hosts. The protein is RxLR effector protein Avh5 of Phytophthora sojae (Soybean stem and root rot agent).